The chain runs to 315 residues: tRNA pseudouridine synthase B (315 aa).

Catalysis depends on D54, which acts as the Nucleophile.

Belongs to the pseudouridine synthase TruB family. Type 1 subfamily.

It carries out the reaction uridine(55) in tRNA = pseudouridine(55) in tRNA. Functionally, responsible for synthesis of pseudouridine from uracil-55 in the psi GC loop of transfer RNAs. This Cupriavidus pinatubonensis (strain JMP 134 / LMG 1197) (Cupriavidus necator (strain JMP 134)) protein is tRNA pseudouridine synthase B.